Consider the following 218-residue polypeptide: Thiopurine S-methyltransferase (218 aa).

Residues tryptophan 10, leucine 45, glutamate 66, and arginine 123 each contribute to the S-adenosyl-L-methionine site.

The protein belongs to the class I-like SAM-binding methyltransferase superfamily. TPMT family.

The protein localises to the cytoplasm. The enzyme catalyses S-adenosyl-L-methionine + a thiopurine = S-adenosyl-L-homocysteine + a thiopurine S-methylether.. This is Thiopurine S-methyltransferase from Shewanella baltica (strain OS195).